A 97-amino-acid chain; its full sequence is Secreted RxLR effector protein BLR05 (97 aa).

Positions 1–21 are cleaved as a signal peptide; that stretch reads MGPQHLLALVVVSILVAAGNA. The short motif at 32-60 is the RxLR-dEER element; that stretch reads RALRPSVIADQEHAVHAIPATNFISKDED. The chain crosses the membrane as a helical span at residues 69–89; the sequence is IEIIRIAIFSLLVVGVFAIMA.

Belongs to the RxLR effector family. As to quaternary structure, interacts with host transcription factor NAC069.

Its subcellular location is the secreted. The protein resides in the host endoplasmic reticulum membrane. Functionally, secreted effector that inhibits stress-induced relocalization of the transcription factor NAC069 to the nucleus, thus affecting its broad role in abiotic and biotic stress responses. This Bremia lactucae (Lettuce downy mildew) protein is Secreted RxLR effector protein BLR05.